A 505-amino-acid polypeptide reads, in one-letter code: Cell division control protein 6 homolog B (505 aa).

Residues 37–72 are disordered; sequence KRKMRSDSAAVSGNSVSTPKKLKSHLPSSVPNPGMS. The span at 45–54 shows a compositional bias: polar residues; sequence AAVSGNSVST.

Belongs to the CDC6/cdc18 family.

The protein localises to the nucleus. In terms of biological role, may be involved in the initiation of DNA replication. The protein is Cell division control protein 6 homolog B of Arabidopsis thaliana (Mouse-ear cress).